Here is a 233-residue protein sequence, read N- to C-terminus: Pirin-like protein YhaK (233 aa).

It belongs to the pirin family. Monomer.

It localises to the cytoplasm. Does not have quercetin 2,3-dioxygenase activity. This is Pirin-like protein YhaK (yhaK) from Escherichia coli O157:H7.